We begin with the raw amino-acid sequence, 423 residues long: Cytochrome c biogenesis protein Ccs1 (423 aa).

Transmembrane regions (helical) follow at residues 11 to 31, 70 to 90, and 153 to 173; these read LKFAIALLLLISITITFGSII, NFWFISLLLSLGISLIACTFF, and IAPVFVHLSIILILLGSIFAS.

This sequence belongs to the Ccs1/CcsB family. As to quaternary structure, may interact with CcsA.

The protein resides in the plastid. It is found in the chloroplast thylakoid membrane. Its function is as follows. Required during biogenesis of c-type cytochromes (cytochrome c6 and cytochrome f) at the step of heme attachment. This chain is Cytochrome c biogenesis protein Ccs1, found in Heterosigma akashiwo (strain NIES-293 / 8280G21-1).